We begin with the raw amino-acid sequence, 369 residues long: Histidinol-phosphate aminotransferase 3 (369 aa).

Residue K220 is modified to N6-(pyridoxal phosphate)lysine.

Belongs to the class-II pyridoxal-phosphate-dependent aminotransferase family. Histidinol-phosphate aminotransferase subfamily. In terms of assembly, homodimer. Pyridoxal 5'-phosphate is required as a cofactor.

The catalysed reaction is L-histidinol phosphate + 2-oxoglutarate = 3-(imidazol-4-yl)-2-oxopropyl phosphate + L-glutamate. The protein operates within amino-acid biosynthesis; L-histidine biosynthesis; L-histidine from 5-phospho-alpha-D-ribose 1-diphosphate: step 7/9. This Mesorhizobium japonicum (strain LMG 29417 / CECT 9101 / MAFF 303099) (Mesorhizobium loti (strain MAFF 303099)) protein is Histidinol-phosphate aminotransferase 3 (hisC3).